The chain runs to 477 residues: Lactate utilization protein B (477 aa).

4Fe-4S ferredoxin-type domains lie at 304–334 and 353–382; these read GTQF…GHSY and YDTY…LHDL. [4Fe-4S] cluster contacts are provided by C313, C316, C319, C323, C366, C369, and C373. Residues 443–463 form a disordered region; that stretch reads GPKPLQAWTNSRDFPMPDDEN.

This sequence belongs to the LutB/YkgF family.

Functionally, is involved in L-lactate degradation and allows cells to grow with lactate as the sole carbon source. Has probably a role as an electron transporter during oxidation of L-lactate. In Macrococcus caseolyticus (strain JCSC5402) (Macrococcoides caseolyticum), this protein is Lactate utilization protein B.